Consider the following 167-residue polypeptide: Leukotoxin-activating lysine-acyltransferase LktC serotype A11 (167 aa).

Catalysis depends on residues His22 and Asp91.

It belongs to the RTX toxin acyltransferase family.

It localises to the cytoplasm. It carries out the reaction a fatty acyl-[ACP] + L-lysyl-[protein] = N(6)-(fatty acyl)-L-lysyl-[protein] + holo-[ACP] + H(+). Functionally, involved in fatty acylation of the protoxin (LktA) at two internal lysine residues, thereby converting it to the active toxin. This is Leukotoxin-activating lysine-acyltransferase LktC serotype A11 (lktC) from Mannheimia haemolytica (Pasteurella haemolytica).